The primary structure comprises 398 residues: Sphingosine 1-phosphate receptor 5 (398 aa).

Over 1–40 the chain is Extracellular; sequence MEPGLLRPAPVSEVIVLHYNYTGKLRGARYQPGAGLRADA. A glycan (N-linked (GlcNAc...) asparagine) is linked at Asn20. Residues 41-61 form a helical membrane-spanning segment; sequence VVCLAVCALIVLENLAVLVVL. Residues 62 to 70 lie on the Cytoplasmic side of the membrane; it reads GRHPRFHAP. Residues 71 to 91 form a helical membrane-spanning segment; sequence MFLLLGSLTLSDLLAGAAYAA. Topologically, residues 92–111 are extracellular; the sequence is NILLSGPLTLRLSPALWFAR. The chain crosses the membrane as a helical span at residues 112 to 132; that stretch reads EGGVFVALAASVLSLLAIALE. Residues 133 to 151 lie on the Cytoplasmic side of the membrane; that stretch reads RLLTMERRGPAPAARRGRT. A helical membrane pass occupies residues 152–172; the sequence is LALAAGAWGVSLLLGLLPALG. The Extracellular portion of the chain corresponds to 173 to 191; that stretch reads WNCLGRLEACSTVLPLYAK. Residues 192 to 212 traverse the membrane as a helical segment; that stretch reads AYVLFCVLAFVGILAAICGLY. The Cytoplasmic portion of the chain corresponds to 213–252; sequence ARIYCQVRAKAQRLRARPGAGEGTSARARGTPRSLALLRT. The helical transmembrane segment at 253 to 273 threads the bilayer; the sequence is LSVVLVAFVACWGPLFLLLLL. The Extracellular portion of the chain corresponds to 274 to 287; that stretch reads DVACPARACPVLLQ. A helical transmembrane segment spans residues 288–308; the sequence is ADPFLGLAMANSLLNPIIYTF. Residues 309-398 are Cytoplasmic-facing; sequence TNRDLRHALL…QTLVPPPAAD (90 aa). Cys323 carries S-palmitoyl cysteine lipidation. The segment at 332 to 398 is disordered; that stretch reads SGTSRSPGST…QTLVPPPAAD (67 aa). Residues 334 to 343 are compositionally biased toward low complexity; that stretch reads TSRSPGSTLG. Ser337 carries the post-translational modification Phosphoserine. Positions 359-373 are enriched in basic and acidic residues; sequence SSSRSERSSPQRDGL. At Ser381 the chain carries Phosphoserine.

This sequence belongs to the G-protein coupled receptor 1 family.

Its subcellular location is the cell membrane. Its function is as follows. Receptor for the lysosphingolipid sphingosine 1-phosphate (S1P). S1P is a bioactive lysophospholipid that elicits diverse physiological effect on most types of cells and tissues. Is coupled to both the G(i/O)alpha and G(12) subclass of heteromeric G-proteins. The protein is Sphingosine 1-phosphate receptor 5 (S1PR5) of Sus scrofa (Pig).